Consider the following 414-residue polypeptide: MDVNQPKQEHLLALKVMRLTKPTLFTNIPVTCEEKDLPGDLFSTLMKDDPSTVKGAEILMLGEMLTLPQNFGNIFLGETFSSYISVHNDSNQVVKDVQVKADLQTSSQRLNLSASSAVVADLKPDSCIDDVIHHEVKEIGTHILVCAVSYTIQSGEKMYFRKFFKFQVLKPLDVKTKFYNAETDEVFLEAQIQNITTSPMFMEKVSLEPSIMYNVSELNTVITNGDWKGSSTFGTKTYLQPLDTRQYLYCLKPKPEFAEKAGVIKGVTVIGKLDIVWKTNLGERGRLQTSQLQRMAPGYGDVRLSIETIPDTVRLEEPFDITCKITNCSSERTMDLVLEMCNTNAIHWSGVSGRQLGKLHPSSSLHLTLTLLSSVQGLQSVSGLRLTDTFLKRTYEYDDIAQVCVVSSKLQAES.

Belongs to the TRAPPC13 family. As to quaternary structure, part of the multisubunit TRAPP (transport protein particle) complex.

This Xenopus laevis (African clawed frog) protein is Trafficking protein particle complex subunit 13 (trappc13).